A 153-amino-acid polypeptide reads, in one-letter code: MPLLLSGRVFRRDLDACGCLAMHVPLEGGSETRLLRRLRAAGYRTQLSSARGLGDPEVFLFELHGIRPPHLGHQSVGRNGAVGEVQQVMPQLAELFVDNAPVVLWLLEGQVLSRSELLALCDLCKRESRLRVVVEMGGARSLNWQPMSTLLGD.

This sequence belongs to the complex I NdhN subunit family. As to quaternary structure, NDH-1 can be composed of about 15 different subunits; different subcomplexes with different compositions have been identified which probably have different functions.

The protein resides in the cellular thylakoid membrane. It carries out the reaction a plastoquinone + NADH + (n+1) H(+)(in) = a plastoquinol + NAD(+) + n H(+)(out). It catalyses the reaction a plastoquinone + NADPH + (n+1) H(+)(in) = a plastoquinol + NADP(+) + n H(+)(out). In terms of biological role, NDH-1 shuttles electrons from an unknown electron donor, via FMN and iron-sulfur (Fe-S) centers, to quinones in the respiratory and/or the photosynthetic chain. The immediate electron acceptor for the enzyme in this species is believed to be plastoquinone. Couples the redox reaction to proton translocation, and thus conserves the redox energy in a proton gradient. Cyanobacterial NDH-1 also plays a role in inorganic carbon-concentration. This is NAD(P)H-quinone oxidoreductase subunit N from Prochlorococcus marinus (strain MIT 9313).